Reading from the N-terminus, the 500-residue chain is MSNMQQKTDVILIGAGIMSATLGSLLKELAPEWEIKVFEKLASAGEESSNEWNNAGTGHSALCELNYTSEKSDGSIDISKAVKVNEQFQLSRQFWAYLVKSKLIRNPQDFIMPLPHMSLVQGEKNVEFLKNRFEALSKNPLFQGMEFSDAPETLKKWLPLIMEGRTSNEPMAATKIDSGTDVNFGALTRMLFDYLQTKNVELNYKHSVENIKRTKNGLWEVKVHDINSGKIEHHTAKFVFIGGGGGSLPLLQKTGIPESKHIGGFPVSGLFMVCKNQKVVEQHHAKVYGKAKVGAPPMSVPHLDTRYIDNKKALLFGPFAGFSPKFLKTGSNLDLIGSVKPNNVLTMLAAGVKEMGLTKYLIQQVMLSHEKRMEELREFIPNAKSEDWDIVVAGQRVQVIKDTDAGGKGTLQFGTEVVSAADGSIAALLGASPGASTAVHVMLEVLEKCFPSRMVEWEGKIKEMIPSYGISLTENPRLFQDLHTSTGRTLGLNEKETVHN.

Belongs to the MQO family. FAD serves as cofactor.

It carries out the reaction (S)-malate + a quinone = a quinol + oxaloacetate. It participates in carbohydrate metabolism; tricarboxylic acid cycle; oxaloacetate from (S)-malate (quinone route): step 1/1. In Bacillus thuringiensis (strain Al Hakam), this protein is Probable malate:quinone oxidoreductase.